Reading from the N-terminus, the 230-residue chain is Uracil phosphoribosyltransferase (230 aa).

38 to 42 (KGLVK) contacts GTP. 5-phospho-alpha-D-ribose 1-diphosphate-binding positions include Arg87, Arg112, and 140-148 (DPMIATGST). Uracil is bound by residues Ile204 and 209–211 (GDA). Asp210 serves as a coordination point for 5-phospho-alpha-D-ribose 1-diphosphate.

Belongs to the UPRTase family. It depends on Mg(2+) as a cofactor.

The enzyme catalyses UMP + diphosphate = 5-phospho-alpha-D-ribose 1-diphosphate + uracil. The protein operates within pyrimidine metabolism; UMP biosynthesis via salvage pathway; UMP from uracil: step 1/1. Its activity is regulated as follows. Allosterically activated by GTP. In terms of biological role, catalyzes the conversion of uracil and 5-phospho-alpha-D-ribose 1-diphosphate (PRPP) to UMP and diphosphate. The protein is Uracil phosphoribosyltransferase of Thermococcus kodakarensis (strain ATCC BAA-918 / JCM 12380 / KOD1) (Pyrococcus kodakaraensis (strain KOD1)).